A 349-amino-acid polypeptide reads, in one-letter code: Phenylalanine--tRNA ligase alpha subunit (349 aa).

E258 contacts Mg(2+).

It belongs to the class-II aminoacyl-tRNA synthetase family. Phe-tRNA synthetase alpha subunit type 1 subfamily. In terms of assembly, tetramer of two alpha and two beta subunits. Mg(2+) serves as cofactor.

The protein localises to the cytoplasm. It carries out the reaction tRNA(Phe) + L-phenylalanine + ATP = L-phenylalanyl-tRNA(Phe) + AMP + diphosphate + H(+). This is Phenylalanine--tRNA ligase alpha subunit from Rickettsia felis (strain ATCC VR-1525 / URRWXCal2) (Rickettsia azadi).